A 328-amino-acid chain; its full sequence is Stress response kinase A (328 aa).

The active-site Proton acceptor is the Asp201. Residues Asn206 and Asp217 each contribute to the Mg(2+) site. Asp217 is an active-site residue.

Belongs to the SrkA/RdoA protein kinase family. Monomer. Requires Mg(2+) as cofactor.

Its subcellular location is the cytoplasm. The catalysed reaction is L-seryl-[protein] + ATP = O-phospho-L-seryl-[protein] + ADP + H(+). The enzyme catalyses L-threonyl-[protein] + ATP = O-phospho-L-threonyl-[protein] + ADP + H(+). Its function is as follows. A protein kinase that phosphorylates Ser and Thr residues. Probably acts to suppress the effects of stress linked to accumulation of reactive oxygen species. Probably involved in the extracytoplasmic stress response. The polypeptide is Stress response kinase A (Salmonella paratyphi A (strain ATCC 9150 / SARB42)).